Here is an 86-residue protein sequence, read N- to C-terminus: Omega-theraphotoxin-Hhn1c (86 aa).

Positions 1 to 21 are cleaved as a signal peptide; it reads MKSIVFVALFGLALLAVVCSA. The propeptide occupies 22–50; the sequence is SEDAHKELLKEVVRAMVVDKTDAVQAEER. 3 disulfide bridges follow: cysteine 52–cysteine 66, cysteine 59–cysteine 71, and cysteine 65–cysteine 78.

The protein belongs to the neurotoxin 10 (Hwtx-1) family. 17 (Hntx-9) subfamily. In terms of tissue distribution, expressed by the venom gland.

The protein resides in the secreted. Functionally, ion channel inhibitor. The chain is Omega-theraphotoxin-Hhn1c from Cyriopagopus hainanus (Chinese bird spider).